Here is a 469-residue protein sequence, read N- to C-terminus: Tetratricopeptide repeat protein 38 (469 aa).

An N-acetylalanine modification is found at alanine 2. The residue at position 5 (serine 5) is a Phosphoserine. TPR repeat units follow at residues 108–141, 180–213, and 252–285; these read REQL…HPTD, SYVK…NPTD, and CHNY…SLQA.

This sequence belongs to the TTC38 family.

The polypeptide is Tetratricopeptide repeat protein 38 (TTC38) (Homo sapiens (Human)).